Reading from the N-terminus, the 669-residue chain is UvrABC system protein C (669 aa).

Positions 14–91 (DSPGCYLHKD…IQRYKPKYNI (78 aa)) constitute a GIY-YIG domain. The UVR domain occupies 196–231 (KKIVKELEGKMISASDNMEFEQAAEYRDVIKAIGTL). The tract at residues 647-669 (PHKSDENWESIKDNVPLLKSEKS) is disordered. Residues 648–658 (HKSDENWESIK) are compositionally biased toward basic and acidic residues.

The protein belongs to the UvrC family. In terms of assembly, interacts with UvrB in an incision complex.

Its subcellular location is the cytoplasm. In terms of biological role, the UvrABC repair system catalyzes the recognition and processing of DNA lesions. UvrC both incises the 5' and 3' sides of the lesion. The N-terminal half is responsible for the 3' incision and the C-terminal half is responsible for the 5' incision. This chain is UvrABC system protein C, found in Lactococcus lactis subsp. cremoris (strain MG1363).